The following is a 62-amino-acid chain: Delta-theraphotoxin-Cg1a 3 (62 aa).

An N-terminal signal peptide occupies residues 1 to 21; the sequence is MKTSILFVIFSLALVFALSPA. Residues 22-29 constitute a propeptide that is removed on maturation; that stretch reads TEIEETDR. Cystine bridges form between Cys31–Cys46, Cys38–Cys51, and Cys45–Cys58.

Belongs to the neurotoxin 10 (Hwtx-1) family. 33 (Jztx-1) subfamily. In terms of tissue distribution, expressed by the venom gland.

The protein resides in the secreted. Its function is as follows. Moderately inhibits voltage-gated sodium channels and weakly inhibits voltage-gated potassium channel. Inhibits the inactivation of rat Nav1.2/SCN2A (IC(50)=870 nM), rat Nav1.3/SCN3A (IC(50)=845 nM), rat Nav1.4/SCN4A (IC(50)=339 nM), human Nav1.5/SCN5A (IC(50)=335 nM) and human Nav1.7/SCN9A sodium channels (IC(50)=348 nM). The toxin delays the inactivation of sodium channels without affecting the activation and steady-state inactivation kinetics in the physiological range of voltages. Site-directed mutagenesis of the sodium channel indicates that the toxin interacts with site 3 located at the extracellular S3-S4 linker of domain IV. On potassium channels, it inhibits activation of channels with an IC(50) of 8.05 uM through a voltage sensor-trapping mechanism. It increases muscle contraction in several assays (mouse phrenic nerve-diaphragm, toad heart, rat vas deferens) and is suggested to act both presynaptically and postsynaptically. The chain is Delta-theraphotoxin-Cg1a 3 from Chilobrachys guangxiensis (Chinese earth tiger tarantula).